We begin with the raw amino-acid sequence, 684 residues long: Multisite-specific tRNA:(cytosine-C(5))-methyltransferase (684 aa).

Residues 1–12 (MARRKNFKKGNK) show a composition bias toward basic residues. The interval 1–24 (MARRKNFKKGNKKTFGARDDSRAQ) is disordered. Residues 173–179 (CAAPGSK), Asp-202, Asp-229, and Asp-257 contribute to the S-adenosyl-L-methionine site. Cys-310 functions as the Nucleophile in the catalytic mechanism. A Phosphothreonine modification is found at Thr-426. Phosphoserine is present on Ser-431. Residues 650 to 684 (KATPSAEEKEKEKETTESPAETTTGTSTEAPSAAN) form a disordered region. The segment covering 655–665 (AEEKEKEKETT) has biased composition (basic and acidic residues). Low complexity predominate over residues 666–684 (ESPAETTTGTSTEAPSAAN). A Phosphoserine modification is found at Ser-667.

Belongs to the class I-like SAM-binding methyltransferase superfamily. RsmB/NOP family. TRM4 subfamily.

It is found in the nucleus. The protein resides in the nucleolus. It catalyses the reaction cytidine(34) in tRNA precursor + S-adenosyl-L-methionine = 5-methylcytidine(34) in tRNA precursor + S-adenosyl-L-homocysteine + H(+). The catalysed reaction is cytidine(40) in tRNA precursor + S-adenosyl-L-methionine = 5-methylcytidine(40) in tRNA precursor + S-adenosyl-L-homocysteine + H(+). The enzyme catalyses cytidine(48) in tRNA + S-adenosyl-L-methionine = 5-methylcytidine(48) in tRNA + S-adenosyl-L-homocysteine + H(+). It carries out the reaction cytidine(49) in tRNA + S-adenosyl-L-methionine = 5-methylcytidine(49) in tRNA + S-adenosyl-L-homocysteine + H(+). Its function is as follows. Methylates cytosine to m5C at several positions in different tRNAs and pre-tRNAs containing intron. Able to modify tRNAs at all four positions (34, 40, 48 and 49) at which m5C has been found in tRNAs. May be involved in ribosome biogenesis as its disruption leads to increased sensitivity to the antibiotic paromomycin. This is Multisite-specific tRNA:(cytosine-C(5))-methyltransferase (NCL1) from Saccharomyces cerevisiae (strain ATCC 204508 / S288c) (Baker's yeast).